We begin with the raw amino-acid sequence, 180 residues long: Major urinary protein 2 (180 aa).

Residues 1-18 (MKMLLLLCLGLTLVCVHA) form the signal peptide. Cys-82 and Cys-175 are disulfide-bonded.

The protein belongs to the calycin superfamily. Lipocalin family. As to expression, abundant in the urine of adult male mice but absent from that of females.

The protein resides in the secreted. In terms of biological role, binds pheromones that are released from drying urine of males. These pheromones affect the sexual behavior of females. In Mus musculus (Mouse), this protein is Major urinary protein 2 (Mup2).